The primary structure comprises 341 residues: MTKQIVTGIIGAGRIGKLHVQNISRIPHMKIKAISDIQASRIKSWADSHQIEYITSDYRDLLHDPDIDAIFICSPTAVHAQMIKEAAEAKKHIFCEKPVSFSLDETSEALAAVRKHGVTLQVGFNRRFDPHFKKIKTIVENGEIGTPHLLKITSRDPEPPNIDYVRTSGGLFMDMSIHDFDMARYIMGSEVTEVYAKGAALVNPSFAELGDIDTAVITLTFENGAMAVIDNSRQAVYGYDQRVEVFGTKGSAAADNSRPTTVEVSTADFVMKDKPHFFFLERYKDSYEEEILRFAEAIGTNQETPCTGNDGLQAGRIARAAQQSLAFGMPVSIEHTEKIAF.

It belongs to the Gfo/Idh/MocA family.

This is an uncharacterized protein from Bacillus subtilis (strain 168).